The following is an 87-amino-acid chain: UPF0250 protein BUsg_472 (87 aa).

Belongs to the UPF0250 family.

The protein is UPF0250 protein BUsg_472 of Buchnera aphidicola subsp. Schizaphis graminum (strain Sg).